Here is a 592-residue protein sequence, read N- to C-terminus: MRSIYCGQLNKTHVDQEVELCGWINKRRDLGGLIFVDLRDREGLVQVVFDSDIEELMSSANTLRQEFCVQLKGIVRARPDSQVNKDMPTGEIEILGTELNIINRSEPLPLDFNQVNSEERRLKYRYLDLRRLEMSDRIKLRAKASSFVRRFLDENGFLDIETPVLTKATPEGARDYLVPSRVHKGSFYALPQSPQLFKQLLMMSGFDRYYQIVKCFRDEDLRADRQPEFTQIDIETSFMSSDQVRGMTEKMIREMWQTLLNVDLGDFPIMPYSEAMSLYGSDKPDLRNPMKLVDIADLVKDVEFNVFSGPANDEKGRVAVLTVPGGAKLSRKQLDDYTKFIGIYGAKGMAWMKVNDHTAGAEGVQSPVAKFLTADVITQLLERTNAQSGDIILFGADKRNTVNEAMGALRVKIGIDLEITNLDSWAPLWVVDFPMFEEDDEGTLHAVHHPFTAPKDMSASELEANPAAAISDAYDMVLNGYEVGGGSVRIHNADMQEAAFRILGINEQEQQDKFGFLLDALKYGTPPHAGLAFGLDRLAMLLCGTDNIRDVIAFPKTTQASCLLTNAPSKPNADSLAELAISVVEKAVLSAE.

Residue E171 participates in L-aspartate binding. The aspartate stretch occupies residues 195-198 (QLFK). Residue R217 coordinates L-aspartate. Residues 217-219 (RDE) and Q226 contribute to the ATP site. H448 contributes to the L-aspartate binding site. Residue E482 coordinates ATP. R489 lines the L-aspartate pocket. Residue 534 to 537 (GLDR) coordinates ATP.

Belongs to the class-II aminoacyl-tRNA synthetase family. Type 1 subfamily. Homodimer.

The protein localises to the cytoplasm. The enzyme catalyses tRNA(Asp) + L-aspartate + ATP = L-aspartyl-tRNA(Asp) + AMP + diphosphate. Functionally, catalyzes the attachment of L-aspartate to tRNA(Asp) in a two-step reaction: L-aspartate is first activated by ATP to form Asp-AMP and then transferred to the acceptor end of tRNA(Asp). This is Aspartate--tRNA ligase from Pseudoalteromonas translucida (strain TAC 125).